The primary structure comprises 207 residues: uncharacterized protein (207 aa).

This is an uncharacterized protein from Frog virus 3 (isolate Goorha) (FV-3).